The primary structure comprises 66 residues: Beta-toxin Css6 (66 aa).

The LCN-type CS-alpha/beta domain maps to 1-66; the sequence is KEGYLVNSYT…VWPLPNKTCN (66 aa). Disulfide bonds link Cys12–Cys65, Cys16–Cys41, Cys25–Cys46, and Cys29–Cys48. Asn66 is modified (asparagine amide).

The protein belongs to the long (4 C-C) scorpion toxin superfamily. Sodium channel inhibitor family. Beta subfamily. Expressed by the venom gland.

It is found in the secreted. Functionally, beta toxins bind voltage-independently at site-4 of sodium channels (Nav) and shift the voltage of activation toward more negative potentials thereby affecting sodium channel activation and promoting spontaneous and repetitive firing. The chain is Beta-toxin Css6 from Centruroides suffusus (Durango bark scorpion).